Reading from the N-terminus, the 372-residue chain is M protein, serotype 2.2 (372 aa).

An N-terminal signal peptide occupies residues 1–41 (MARQQTKKNYSLRKLKTGTASVAVALTVLGAGFANQTEVRA). 3 C repeats span residues 124–158 (AKTT…EAKH), 166–200 (KKLT…EAKY), and 215–249 (QKLE…TSEL). Basic and acidic residues-rich tracts occupy residues 125-169 (KTTK…KKLT), 226-246 (TSRK…KKVT), and 260-274 (EESK…AELQ). Disordered regions lie at residues 125–191 (KTTK…ASRA) and 211–274 (EAKH…AELQ). 4 D repeats span residues 275–280 (AKLDAQ), 281–286 (GKALKE), 289–294 (AKQTEE), and 296–301 (AKLRAE). The segment covering 295–304 (LAKLRAEKAA) has biased composition (basic and acidic residues). Positions 295–344 (LAKLRAEKAAGSKTPATKPANKERSGRAAQTATRPSQNKGMRSQLPSTGE) are disordered. Over residues 322-341 (AAQTATRPSQNKGMRSQLPS) the composition is skewed to polar residues. The LPXTG sorting signal signature appears at 339–343 (LPSTG). Position 342 is a pentaglycyl murein peptidoglycan amidated threonine (Thr-342). The propeptide at 343–372 (GEAANPFFTAAAATVMVSAGMLALKRKEEN) is removed by sortase.

The protein belongs to the M protein family.

The protein localises to the secreted. The protein resides in the cell wall. This protein is one of the different antigenic serotypes of protein M. Protein M is closely associated with virulence of the bacterium and can render the organism resistant to phagocytosis. This is M protein, serotype 2.2 (emmL2.2) from Streptococcus pyogenes.